A 132-amino-acid chain; its full sequence is Small ribosomal subunit protein uS8 (132 aa).

The protein belongs to the universal ribosomal protein uS8 family. Part of the 30S ribosomal subunit. Contacts proteins S5 and S12.

In terms of biological role, one of the primary rRNA binding proteins, it binds directly to 16S rRNA central domain where it helps coordinate assembly of the platform of the 30S subunit. This is Small ribosomal subunit protein uS8 from Streptococcus pneumoniae serotype 19F (strain G54).